An 85-amino-acid chain; its full sequence is Beta-insect depressant toxin Lqh-dprIT3d (85 aa).

A signal peptide spans 1–21 (MKLLLLLTISASMLIEGLVNA). In terms of domain architecture, LCN-type CS-alpha/beta spans 22–82 (DGYIRGGDGC…EWDYETNTCG (61 aa)). 4 disulfides stabilise this stretch: Cys31-Cys81, Cys35-Cys56, Cys42-Cys63, and Cys46-Cys65. Gly82 is modified (glycine amide).

Belongs to the long (4 C-C) scorpion toxin superfamily. Sodium channel inhibitor family. Beta subfamily. In terms of tissue distribution, expressed by the venom gland.

Its subcellular location is the secreted. Depressant insect beta-toxins cause a transient contraction paralysis followed by a slow flaccid paralysis. They bind voltage-independently at site-4 of sodium channels (Nav) and block action potentials, primarily by depolarizing the axonal membrane and suppressing the sodium current. This depressant toxin is active only on insects. It is found in a relatively small amount in the venom, and its activity on insects is 10-fold higher compared to other known depressant toxins. The chain is Beta-insect depressant toxin Lqh-dprIT3d from Leiurus hebraeus (Hebrew deathstalker scorpion).